We begin with the raw amino-acid sequence, 133 residues long: Small ribosomal subunit protein uS8 (133 aa).

The protein belongs to the universal ribosomal protein uS8 family. As to quaternary structure, part of the 30S ribosomal subunit.

In terms of biological role, one of the primary rRNA binding proteins, it binds directly to 16S rRNA central domain where it helps coordinate assembly of the platform of the 30S subunit. The sequence is that of Small ribosomal subunit protein uS8 from Saccharolobus islandicus (strain L.S.2.15 / Lassen #1) (Sulfolobus islandicus).